Reading from the N-terminus, the 122-residue chain is Large ribosomal subunit protein uL14c (122 aa).

The protein belongs to the universal ribosomal protein uL14 family. As to quaternary structure, part of the 50S ribosomal subunit.

The protein resides in the plastid. The protein localises to the chloroplast. In terms of biological role, binds to 23S rRNA. This chain is Large ribosomal subunit protein uL14c, found in Staurastrum punctulatum (Green alga).